The chain runs to 468 residues: UDP-glucosyl transferase 74CD1 (468 aa).

Glycine 20 is a UDP-alpha-D-glucose binding site. Residue histidine 21 is the Proton acceptor of the active site. Aspartate 114 (charge relay) is an active-site residue. 10 residues coordinate UDP-alpha-D-glucose: serine 292, tryptophan 344, glutamine 347, histidine 362, tryptophan 365, asparagine 366, serine 367, glutamate 370, aspartate 386, and glutamine 387.

It belongs to the UDP-glycosyltransferase family. As to expression, mainly expressed in flowers, flower buds and young leaves, and, to a lesser extent, in old leaves, stems and roots.

It participates in secondary metabolite biosynthesis; terpenoid biosynthesis. Its function is as follows. Component of the oleanane-type triterpene saponins (e.g. saponarioside A and saponarioside B) biosynthetic pathway, leading to the production of natural products with detergent properties used as traditional sources of soap. A glycosyltransferase that, together with SDR1, mediates the conversion of QA-tri to QA-triF; UGT74CD1 may transfer 4-keto-6-deoxy-glucose to QA-tri, which is in turn reduced to D-fucose by SDR1, thus leading to QA-triF formation via the initiation of the C-28 sugar chain. The protein is UDP-glucosyl transferase 74CD1 of Saponaria officinalis (Common soapwort).